The primary structure comprises 281 residues: Type VI secretion system accessory component TagJ (281 aa).

Interacts with TssB1 (via N-terminus). Interacts with ClpV1.

In terms of biological role, component of the H1 type VI (H1-T6SS) secretion system that plays a role in the release of toxins targeting both eukaryotic and prokaryotic species. Forms a stable complex with TssB1. This complex, although not crucial for the H1-T6SS function, may fine-tune the assembly of the system. Plays a role in the interaction between ClpV1 and the TssC1/TssB1 sheath. The protein is Type VI secretion system accessory component TagJ of Pseudomonas aeruginosa (strain ATCC 15692 / DSM 22644 / CIP 104116 / JCM 14847 / LMG 12228 / 1C / PRS 101 / PAO1).